Reading from the N-terminus, the 311-residue chain is Ribonuclease 3 (311 aa).

Residues 20-145 (YLCFYRILGF…FIGAIYLDQG (126 aa)) enclose the RNase III domain. Glu-62 is a Mg(2+) binding site. The active site involves Asp-66. Residues Asn-131 and Glu-134 each contribute to the Mg(2+) site. Glu-134 is a catalytic residue. Positions 173 to 242 (NFKSKLIEWS…AQMAIKKVKD (70 aa)) constitute a DRBM domain. The segment at 250-311 (NEAKSQHSKP…EVEATETEKE (62 aa)) is disordered. Positions 262-288 (VETESVEPELTESETMEPDTLETEAPE) are enriched in acidic residues.

It belongs to the ribonuclease III family. Homodimer. It depends on Mg(2+) as a cofactor.

The protein localises to the cytoplasm. The enzyme catalyses Endonucleolytic cleavage to 5'-phosphomonoester.. Digests double-stranded RNA. Involved in the processing of primary rRNA transcript to yield the immediate precursors to the large and small rRNAs (23S and 16S). Processes some mRNAs, and tRNAs when they are encoded in the rRNA operon. Processes pre-crRNA and tracrRNA of type II CRISPR loci if present in the organism. The sequence is that of Ribonuclease 3 from Bacteroides thetaiotaomicron (strain ATCC 29148 / DSM 2079 / JCM 5827 / CCUG 10774 / NCTC 10582 / VPI-5482 / E50).